The chain runs to 27 residues: Larval-specific very high density lipoprotein (27 aa).

As to quaternary structure, homodimer. Hemolymph.

It localises to the secreted. It is found in the extracellular space. Unknown (it might play a role in lipid transport and/or storage protein metabolism during metamorphosis). This Apis mellifera (Honeybee) protein is Larval-specific very high density lipoprotein.